An 819-amino-acid chain; its full sequence is Ion-translocating oxidoreductase complex subunit C (819 aa).

4Fe-4S ferredoxin-type domains are found at residues 368–398 (EYAE…QQLY) and 408–437 (KSEE…IQYF). Cys-378, Cys-381, Cys-384, Cys-388, Cys-417, Cys-420, Cys-423, and Cys-427 together coordinate [4Fe-4S] cluster. 2 stretches are compositionally biased toward basic and acidic residues: residues 465–477 (QARM…ERKA) and 485–513 (ARRE…KANE). 3 disordered regions span residues 465-568 (QARM…NAKK), 580-677 (AKKL…TALD), and 692-793 (AKKL…PKKA). Polar residues-rich tracts occupy residues 554-565 (VENQEQQTQPTN) and 587-601 (NSTS…TAEN). Positions 602–614 (QVEKTKSAVEKTQ) are enriched in basic and acidic residues. The span at 641–656 (QTNSTSEAISNSQTAE) shows a compositional bias: polar residues. The span at 658 to 671 (EVEKTKSAVEKTEE) shows a compositional bias: basic and acidic residues. Composition is skewed to polar residues over residues 699-712 (NSAS…QTAE) and 755-768 (NSTS…QTAE). The span at 770–782 (EVEKTKSAVEKTQ) shows a compositional bias: basic and acidic residues.

Belongs to the 4Fe4S bacterial-type ferredoxin family. RnfC subfamily. As to quaternary structure, the complex is composed of six subunits: RnfA, RnfB, RnfC, RnfD, RnfE and RnfG. Requires [4Fe-4S] cluster as cofactor.

Its subcellular location is the cell inner membrane. Functionally, part of a membrane-bound complex that couples electron transfer with translocation of ions across the membrane. This chain is Ion-translocating oxidoreductase complex subunit C, found in Haemophilus influenzae (strain ATCC 51907 / DSM 11121 / KW20 / Rd).